The following is a 25-amino-acid chain: GWASKIGETLGKMAKVGLHELIQPK.

In terms of tissue distribution, expressed by the skin glands.

It localises to the secreted. Antimicrobial peptide. The protein is Xenoposin precursor fragment BM2 of Xenopus boumbaensis (Mawa clawed frog).